Reading from the N-terminus, the 431-residue chain is Histidine--tRNA ligase (431 aa).

The protein belongs to the class-II aminoacyl-tRNA synthetase family. Homodimer.

The protein resides in the cytoplasm. It carries out the reaction tRNA(His) + L-histidine + ATP = L-histidyl-tRNA(His) + AMP + diphosphate + H(+). This is Histidine--tRNA ligase from Levilactobacillus brevis (strain ATCC 367 / BCRC 12310 / CIP 105137 / JCM 1170 / LMG 11437 / NCIMB 947 / NCTC 947) (Lactobacillus brevis).